We begin with the raw amino-acid sequence, 266 residues long: Large ribosomal subunit protein eL8 (266 aa).

Positions 104–130 are enriched in basic and acidic residues; it reads PETKQEKKQRLLARAEQKAAGKGDTPT. The segment at 104-135 is disordered; sequence PETKQEKKQRLLARAEQKAAGKGDTPTKRPPV.

It belongs to the eukaryotic ribosomal protein eL8 family. Component of the large ribosomal subunit.

Its subcellular location is the cytoplasm. Its function is as follows. Component of the large ribosomal subunit. The ribosome is a large ribonucleoprotein complex responsible for the synthesis of proteins in the cell. This is Large ribosomal subunit protein eL8 (RPL7A) from Gallus gallus (Chicken).